The chain runs to 87 residues: Small ribosomal subunit protein bS18 (87 aa).

The span at 1–10 (MAGKSSGDRR) shows a compositional bias: basic and acidic residues. Residues 1 to 23 (MAGKSSGDRRKLLRGAKVGKNAA) form a disordered region.

It belongs to the bacterial ribosomal protein bS18 family. Part of the 30S ribosomal subunit. Forms a tight heterodimer with protein bS6.

In terms of biological role, binds as a heterodimer with protein bS6 to the central domain of the 16S rRNA, where it helps stabilize the platform of the 30S subunit. This Clavibacter sepedonicus (Clavibacter michiganensis subsp. sepedonicus) protein is Small ribosomal subunit protein bS18.